A 353-amino-acid chain; its full sequence is N-terminal EF-hand calcium-binding protein 3 (353 aa).

The 36-residue stretch at 27–62 (AGHALFQDVFRRADKNDDGKLSFEEFQNYFADGVLS) folds into the EF-hand domain. Residues D40, N42, D44, K46, and E51 each contribute to the Ca(2+) site. Residues 172 to 181 (IKAQSRPCGS) form a required for interaction with APBA3 region. Residues 193–203 (SWSPSWSPGSS) show a composition bias toward low complexity. The disordered stretch occupies residues 193–213 (SWSPSWSPGSSDTGRSSEAEQ). A compositionally biased stretch (polar residues) spans 204-213 (DTGRSSEAEQ). In terms of domain architecture, ABM spans 253–342 (LVAQRQVQVA…QAPDTLTTVF (90 aa)).

In terms of assembly, interacts with the N-terminal domain of APBA2. Interacts with NEK2. Interacts with APBA3; APBA3 seems to mediate the interaction between NECAB3 and HIF1AN. Phosphorylated by NEK2. As to expression, widely expressed, with highest levels in the brain.

It is found in the golgi apparatus. In terms of biological role, inhibits the interaction of APBA2 with amyloid-beta precursor protein (APP), and hence allows formation of amyloid-beta. May enhance the activity of HIF1A and thus promote glycolysis under normoxic conditions; the function requires its ABM domain and may implicate the stabilization of the interaction between HIF1AN and APBA3. The sequence is that of N-terminal EF-hand calcium-binding protein 3 (Necab3) from Mus musculus (Mouse).